Consider the following 708-residue polypeptide: ABC transporter G family member 18 (708 aa).

Positions 75 to 317 (RRRFDFSRRK…FSSFGRPIPE (243 aa)) constitute an ABC transporter domain. Residue 109 to 116 (GGSGAGKS) coordinates ATP. An ABC transmembrane type-2 domain is found at 402-612 (AETFILAKRY…PYEAVLINEF (211 aa)). Transmembrane regions (helical) follow at residues 421-441 (LIGM…TVYW), 456-476 (FFAF…PVFI), 508-528 (LLAL…LSGG), 537-557 (LIIY…SGLI), 560-580 (VMMS…LGGF), 589-609 (LYWI…AVLI), and 681-701 (LWIT…SLLF).

Belongs to the ABC transporter superfamily. ABCG family. Eye pigment precursor importer (TC 3.A.1.204) subfamily.

The protein localises to the membrane. This is ABC transporter G family member 18 (ABCG18) from Arabidopsis thaliana (Mouse-ear cress).